Consider the following 88-residue polypeptide: MGLLGYFRSDIPKKSSAKLAKDRLQIIVAHEHSNAVCPAYLPEMQNEIIEVIRKFMKISNDDVKCEFSDNAEDDMSVLEVNITLPKNR.

It belongs to the MinE family.

Prevents the cell division inhibition by proteins MinC and MinD at internal division sites while permitting inhibition at polar sites. This ensures cell division at the proper site by restricting the formation of a division septum at the midpoint of the long axis of the cell. This chain is Cell division topological specificity factor, found in Psychromonas ingrahamii (strain DSM 17664 / CCUG 51855 / 37).